The sequence spans 689 residues: Protein SDA1 homolog (689 aa).

The stretch at 254–319 (KKNTKNKKKL…RFEVKLMHMD (66 aa)) forms a coiled coil. 2 disordered regions span residues 485–512 (EQEK…DGEW) and 606–689 (KPKS…RLMK). The segment covering 668–681 (SFRDKQIALRDSLL) has biased composition (basic and acidic residues).

This sequence belongs to the SDA1 family.

Its subcellular location is the nucleus. The protein localises to the nucleolus. Its function is as follows. Required for 60S pre-ribosomal subunits export to the cytoplasm. This is Protein SDA1 homolog (sdad1) from Xenopus tropicalis (Western clawed frog).